The sequence spans 797 residues: Inactive dipeptidyl peptidase 10 (797 aa).

Residues 1–28 (MKQEQQPTPGARATQSQPADQELGSNSP) are disordered. Residues 1 to 34 (MKQEQQPTPGARATQSQPADQELGSNSPPQRNWK) lie on the Cytoplasmic side of the membrane. A helical; Signal-anchor for type II membrane protein membrane pass occupies residues 35-55 (GIAIALLVILVVCSLITMSVI). Topologically, residues 56–797 (LLTPDELTNS…VLPQEPEEDE (742 aa)) are extracellular. Asn-64, Asn-91, Asn-112, and Asn-120 each carry an N-linked (GlcNAc...) asparagine glycan. Residues Tyr-139 and Tyr-144 each carry the phosphotyrosine modification. Asn-258, Asn-343, Asn-518, and Asn-749 each carry an N-linked (GlcNAc...) asparagine glycan.

It belongs to the peptidase S9B family. DPPIV subfamily. May form oligomers. Interacts with KCND1 and KCND2. Post-translationally, N-glycosylation is important for cell surface expression, specially at Asn-258, which is crucial. Detected in brain cortex (at protein level). Expressed in the brain, predominantly by neurons and not by glia.

It localises to the cell membrane. Its function is as follows. Promotes cell surface expression of the potassium channel KCND2. Modulates the activity and gating characteristics of the potassium channel KCND2. Has no dipeptidyl aminopeptidase activity. The polypeptide is Inactive dipeptidyl peptidase 10 (Dpp10) (Mus musculus (Mouse)).